Here is a 562-residue protein sequence, read N- to C-terminus: BOS complex subunit NCLN (562 aa).

A signal peptide spans 1 to 41 (MLEEAGEVLESVLKASCLPLSFLLFVPAVLLLLGPPPAAEA). At 42–521 (AHESTVYRMQ…VMNAYRVKPA (480 aa)) the chain is on the extracellular side. The N-linked (GlcNAc...) asparagine glycan is linked to Asn240. Residues 420-447 (GFDEGHLQPNREGSTCRSADLHGSDADP) are disordered. The chain crosses the membrane as a helical span at residues 522–542 (IFDLLLAVCIAAYLGVAYVAV). The Cytoplasmic segment spans residues 543 to 562 (QNFGLLYRMIQRLSLKTKQQ).

This sequence belongs to the nicastrin family. Component of the multi-pass translocon (MPT) complex.

It is found in the endoplasmic reticulum membrane. Its function is as follows. Component of the multi-pass translocon (MPT) complex that mediates insertion of multi-pass membrane proteins into the lipid bilayer of membranes. The MPT complex takes over after the SEC61 complex: following membrane insertion of the first few transmembrane segments of proteins by the SEC61 complex, the MPT complex occludes the lateral gate of the SEC61 complex to promote insertion of subsequent transmembrane regions. May antagonize Nodal signaling and subsequent organization of axial structures during mesodermal patterning, via its interaction with NOMO. The polypeptide is BOS complex subunit NCLN (NCLN) (Gallus gallus (Chicken)).